Consider the following 711-residue polypeptide: Myb-like protein B (711 aa).

The segment covering 24–50 (QPQQSIQQQQQQQQQQQQQQQQQQQQQ) has biased composition (low complexity). Disordered stretches follow at residues 24 to 70 (QPQQ…SPQL) and 113 to 235 (NYHT…IINN). 2 stretches are compositionally biased toward polar residues: residues 113–139 (NYHT…SPPT) and 148–157 (TPLSSSTGFS). Low complexity-rich tracts occupy residues 158-187 (NNNN…NNNI) and 198-235 (NNYP…IINN). 2 HTH myb-type domains span residues 428 to 490 (RESI…SPEI) and 491 to 542 (KKGS…SRQT). 2 consecutive DNA-binding regions (H-T-H motif) follow at residues 462 to 486 (WKKI…KRVL) and 514 to 538 (WKNV…KAIM). A Myb-like domain is found at 540–598 (RQTEWNQLEDDILTKKIKLMTQNNEKISFQQVSKHLARAKTTKIPRTALECKSRWSQLN). Positions 598-640 (NSTNVNNNNNNNNNSITTSSSNTNQQQQSTMVTPTSSPLSSPI) are disordered.

The protein localises to the nucleus. Transcriptional activator that initiates multicellular development by induction of adenylyl cyclase expression. This chain is Myb-like protein B (mybB), found in Dictyostelium discoideum (Social amoeba).